We begin with the raw amino-acid sequence, 356 residues long: uncharacterized protein (356 aa).

Transmembrane regions (helical) follow at residues 7 to 29 (LLSR…VSLY), 49 to 71 (YFLN…ISLI), 91 to 113 (ISPL…TFLL), 270 to 292 (LFYR…YLFF), 299 to 316 (QVIP…LVIL), and 329 to 348 (VLYS…KGVY).

Its subcellular location is the cell membrane. This is an uncharacterized protein from Aquifex aeolicus (strain VF5).